We begin with the raw amino-acid sequence, 195 residues long: Imidazoleglycerol-phosphate dehydratase (195 aa).

Belongs to the imidazoleglycerol-phosphate dehydratase family.

The protein localises to the cytoplasm. The enzyme catalyses D-erythro-1-(imidazol-4-yl)glycerol 3-phosphate = 3-(imidazol-4-yl)-2-oxopropyl phosphate + H2O. It functions in the pathway amino-acid biosynthesis; L-histidine biosynthesis; L-histidine from 5-phospho-alpha-D-ribose 1-diphosphate: step 6/9. The sequence is that of Imidazoleglycerol-phosphate dehydratase from Acetivibrio thermocellus (strain ATCC 27405 / DSM 1237 / JCM 9322 / NBRC 103400 / NCIMB 10682 / NRRL B-4536 / VPI 7372) (Clostridium thermocellum).